We begin with the raw amino-acid sequence, 1538 residues long: Dicer-like protein 1 (1538 aa).

Residues 39–72 (DPAESSADVHKDEHSSDNSDNDNEAVPKPNDFSQ) form a disordered region. Residues 45-55 (ADVHKDEHSSD) show a composition bias toward basic and acidic residues. A Helicase ATP-binding domain is found at 134–315 (LFERAKTQNT…EAATRLETLL (182 aa)). ATP is bound at residue 147–154 (LDTGSGKT). A DEAH box motif is present at residues 260–263 (DEAH). A Helicase C-terminal domain is found at 460-619 (ELSKHFSDTT…ETLPEDRILH (160 aa)). In terms of domain architecture, Dicer dsRNA-binding fold spans 652–742 (AIAILARYAS…NSIYHRRLPA (91 aa)). The PAZ domain maps to 892 to 1020 (DTVSFVHNND…ICAEPLRISA (129 aa)). RNase III domains follow at residues 1044 to 1203 (IALE…LSGG) and 1254 to 1406 (ARHV…VDSK). Glu-1295, Asp-1392, and Glu-1395 together coordinate Mg(2+). The region spanning 1440–1508 (TFLHNKLTNE…SEKALAVLDG (69 aa)) is the DRBM domain. Cys-1452, His-1479, Cys-1520, and Cys-1522 together coordinate Zn(2+).

The protein belongs to the helicase family. Dicer subfamily. Mg(2+) is required as a cofactor. Requires Mn(2+) as cofactor.

Dicer-like endonuclease involved in cleaving double-stranded RNA in the RNA interference (RNAi) pathway. Produces 21 to 25 bp dsRNAs (siRNAs) which target the selective destruction of homologous RNAs leading to sequence-specific suppression of gene expression, called post-transcriptional gene silencing (PTGS). Part of a broad host defense response against viral infection and transposons. The sequence is that of Dicer-like protein 1 (dcl1) from Neosartorya fischeri (strain ATCC 1020 / DSM 3700 / CBS 544.65 / FGSC A1164 / JCM 1740 / NRRL 181 / WB 181) (Aspergillus fischerianus).